Here is a 97-residue protein sequence, read N- to C-terminus: Small, acid-soluble spore protein gamma-type (97 aa).

Residues 1 to 42 (MAKQTNKTASGTSTQHVKQQNAQASKNNFGTEFGSETNVQEV) are compositionally biased toward polar residues. The segment at 1–97 (MAKQTNKTAS…KNQNSGKYQG (97 aa)) is disordered. 2 consecutive repeats follow at residues 23–56 (QASK…KSQN) and 58–91 (QASK…KNQN). The span at 43–63 (KQQNAQAAANKSQNAQASKNN) shows a compositional bias: low complexity. The segment covering 69 to 78 (ASETSAQEVR) has biased composition (polar residues). Low complexity predominate over residues 79 to 91 (QQNAQAQAKKNQN).

The protein belongs to the gamma-type SASP family.

In terms of biological role, SASP are proteins degraded in the first minutes of spore germination and provide amino acids for both new protein synthesis and metabolism. These proteins may be involved in dormant spore's high resistance to UV light. The chain is Small, acid-soluble spore protein gamma-type (sasP-B) from Priestia megaterium (Bacillus megaterium).